A 24-amino-acid polypeptide reads, in one-letter code: Positive regulator of RepFIC repA1 expression (24 aa).

The sequence is that of Positive regulator of RepFIC repA1 expression (repL) from Escherichia coli (strain K12).